A 239-amino-acid chain; its full sequence is Carboxy-S-adenosyl-L-methionine synthase (239 aa).

S-adenosyl-L-methionine contacts are provided by residues Tyr-35, Gly-64 to Ser-66, Asp-88 to Asn-89, and Arg-195.

This sequence belongs to the class I-like SAM-binding methyltransferase superfamily. Cx-SAM synthase family. Homodimer.

It catalyses the reaction prephenate + S-adenosyl-L-methionine = carboxy-S-adenosyl-L-methionine + 3-phenylpyruvate + H2O. Its function is as follows. Catalyzes the conversion of S-adenosyl-L-methionine (SAM) to carboxy-S-adenosyl-L-methionine (Cx-SAM). The sequence is that of Carboxy-S-adenosyl-L-methionine synthase from Helicobacter pylori (strain Shi470).